The sequence spans 504 residues: Glutamate--tRNA ligase (504 aa).

Positions 25–35 (PSPTGNPHVGL) match the 'HIGH' region motif. Cysteine 122, cysteine 124, cysteine 149, and aspartate 151 together coordinate Zn(2+). A 'KMSKS' region motif is present at residues 270–274 (KLSKR). ATP is bound at residue lysine 273.

The protein belongs to the class-I aminoacyl-tRNA synthetase family. Glutamate--tRNA ligase type 1 subfamily. As to quaternary structure, monomer. Requires Zn(2+) as cofactor.

It is found in the cytoplasm. The enzyme catalyses tRNA(Glu) + L-glutamate + ATP = L-glutamyl-tRNA(Glu) + AMP + diphosphate. Catalyzes the attachment of glutamate to tRNA(Glu) in a two-step reaction: glutamate is first activated by ATP to form Glu-AMP and then transferred to the acceptor end of tRNA(Glu). The polypeptide is Glutamate--tRNA ligase (Streptomyces griseus subsp. griseus (strain JCM 4626 / CBS 651.72 / NBRC 13350 / KCC S-0626 / ISP 5235)).